Consider the following 103-residue polypeptide: Small ribosomal subunit protein eS25 (103 aa).

The segment at 1–23 (MGGEDMAKKKAPSAKEGEKQQGF) is disordered.

This sequence belongs to the eukaryotic ribosomal protein eS25 family.

The protein is Small ribosomal subunit protein eS25 (rps25e) of Aeropyrum pernix (strain ATCC 700893 / DSM 11879 / JCM 9820 / NBRC 100138 / K1).